Here is a 142-residue protein sequence, read N- to C-terminus: Large ribosomal subunit protein bL19 (142 aa).

It belongs to the bacterial ribosomal protein bL19 family.

This protein is located at the 30S-50S ribosomal subunit interface and may play a role in the structure and function of the aminoacyl-tRNA binding site. The protein is Large ribosomal subunit protein bL19 of Psychrobacter cryohalolentis (strain ATCC BAA-1226 / DSM 17306 / VKM B-2378 / K5).